A 265-amino-acid polypeptide reads, in one-letter code: NAD kinase (265 aa).

The active-site Proton acceptor is Asp-45. NAD(+)-binding positions include 45 to 46, 121 to 122, Arg-147, Asp-149, 160 to 165, Ala-184, and Gln-222; these read DG, NE, and TAYSKS.

Belongs to the NAD kinase family. A divalent metal cation serves as cofactor.

The protein localises to the cytoplasm. The catalysed reaction is NAD(+) + ATP = ADP + NADP(+) + H(+). Functionally, involved in the regulation of the intracellular balance of NAD and NADP, and is a key enzyme in the biosynthesis of NADP. Catalyzes specifically the phosphorylation on 2'-hydroxyl of the adenosine moiety of NAD to yield NADP. This is NAD kinase from Lacticaseibacillus paracasei (strain ATCC 334 / BCRC 17002 / CCUG 31169 / CIP 107868 / KCTC 3260 / NRRL B-441) (Lactobacillus paracasei).